Here is a 412-residue protein sequence, read N- to C-terminus: DNA replication and repair protein RecF (412 aa).

Position 30–37 (30–37 (GKNGLGKT)) interacts with ATP.

The protein belongs to the RecF family.

It is found in the cytoplasm. Its function is as follows. The RecF protein is involved in DNA metabolism; it is required for DNA replication and normal SOS inducibility. RecF binds preferentially to single-stranded, linear DNA. It also seems to bind ATP. The polypeptide is DNA replication and repair protein RecF (Bifidobacterium longum subsp. infantis (strain ATCC 15697 / DSM 20088 / JCM 1222 / NCTC 11817 / S12)).